The chain runs to 311 residues: 4-hydroxy-tetrahydrodipicolinate synthase (311 aa).

T51 contributes to the pyruvate binding site. The Proton donor/acceptor role is filled by Y140. Residue K168 is the Schiff-base intermediate with substrate of the active site. I209 lines the pyruvate pocket.

The protein belongs to the DapA family. In terms of assembly, homotetramer; dimer of dimers.

Its subcellular location is the cytoplasm. The enzyme catalyses L-aspartate 4-semialdehyde + pyruvate = (2S,4S)-4-hydroxy-2,3,4,5-tetrahydrodipicolinate + H2O + H(+). The protein operates within amino-acid biosynthesis; L-lysine biosynthesis via DAP pathway; (S)-tetrahydrodipicolinate from L-aspartate: step 3/4. Its function is as follows. Catalyzes the condensation of (S)-aspartate-beta-semialdehyde [(S)-ASA] and pyruvate to 4-hydroxy-tetrahydrodipicolinate (HTPA). The polypeptide is 4-hydroxy-tetrahydrodipicolinate synthase (Streptococcus pneumoniae (strain CGSP14)).